The primary structure comprises 238 residues: Sugar fermentation stimulation protein homolog (238 aa).

The protein belongs to the SfsA family.

The chain is Sugar fermentation stimulation protein homolog from Brucella abortus (strain S19).